We begin with the raw amino-acid sequence, 494 residues long: Glutamyl-tRNA(Gln) amidotransferase subunit A (494 aa).

Active-site charge relay system residues include K80 and S160. Residues 140–168 are disordered; that stretch reads GNVISPWRRPGDTAPLAPGGSSGGSSSAV. S184 functions as the Acyl-ester intermediate in the catalytic mechanism.

It belongs to the amidase family. GatA subfamily. In terms of assembly, heterotrimer of A, B and C subunits.

The enzyme catalyses L-glutamyl-tRNA(Gln) + L-glutamine + ATP + H2O = L-glutaminyl-tRNA(Gln) + L-glutamate + ADP + phosphate + H(+). Functionally, allows the formation of correctly charged Gln-tRNA(Gln) through the transamidation of misacylated Glu-tRNA(Gln) in organisms which lack glutaminyl-tRNA synthetase. The reaction takes place in the presence of glutamine and ATP through an activated gamma-phospho-Glu-tRNA(Gln). This Novosphingobium aromaticivorans (strain ATCC 700278 / DSM 12444 / CCUG 56034 / CIP 105152 / NBRC 16084 / F199) protein is Glutamyl-tRNA(Gln) amidotransferase subunit A.